The sequence spans 426 residues: Glutamate-1-semialdehyde 2,1-aminomutase (426 aa).

Residue lysine 265 is modified to N6-(pyridoxal phosphate)lysine.

Belongs to the class-III pyridoxal-phosphate-dependent aminotransferase family. HemL subfamily. As to quaternary structure, homodimer. Pyridoxal 5'-phosphate serves as cofactor.

The protein localises to the cytoplasm. The catalysed reaction is (S)-4-amino-5-oxopentanoate = 5-aminolevulinate. It participates in porphyrin-containing compound metabolism; protoporphyrin-IX biosynthesis; 5-aminolevulinate from L-glutamyl-tRNA(Glu): step 2/2. The protein is Glutamate-1-semialdehyde 2,1-aminomutase of Escherichia coli O139:H28 (strain E24377A / ETEC).